We begin with the raw amino-acid sequence, 149 residues long: Flagellar assembly factor FliW (149 aa).

Belongs to the FliW family. Interacts with translational regulator CsrA and flagellin(s).

Its subcellular location is the cytoplasm. In terms of biological role, acts as an anti-CsrA protein, binds CsrA and prevents it from repressing translation of its target genes, one of which is flagellin. Binds to flagellin and participates in the assembly of the flagellum. The protein is Flagellar assembly factor FliW of Thermotoga petrophila (strain ATCC BAA-488 / DSM 13995 / JCM 10881 / RKU-1).